Here is a 570-residue protein sequence, read N- to C-terminus: Sulfite reductase [NADPH] hemoprotein beta-component (570 aa).

[4Fe-4S] cluster is bound by residues Cys434, Cys440, Cys479, and Cys483. Cys483 contributes to the siroheme binding site.

Belongs to the nitrite and sulfite reductase 4Fe-4S domain family. As to quaternary structure, alpha(8)-beta(8). The alpha component is a flavoprotein, the beta component is a hemoprotein. Siroheme is required as a cofactor. Requires [4Fe-4S] cluster as cofactor.

It catalyses the reaction hydrogen sulfide + 3 NADP(+) + 3 H2O = sulfite + 3 NADPH + 4 H(+). The protein operates within sulfur metabolism; hydrogen sulfide biosynthesis; hydrogen sulfide from sulfite (NADPH route): step 1/1. In terms of biological role, component of the sulfite reductase complex that catalyzes the 6-electron reduction of sulfite to sulfide. This is one of several activities required for the biosynthesis of L-cysteine from sulfate. In Zymomonas mobilis subsp. mobilis (strain ATCC 31821 / ZM4 / CP4), this protein is Sulfite reductase [NADPH] hemoprotein beta-component.